A 300-amino-acid chain; its full sequence is UDP-N-acetylenolpyruvoylglucosamine reductase (300 aa).

The FAD-binding PCMH-type domain maps to 30 to 194; that stretch reads RVGGPADFFV…IGATFVLDSD (165 aa). The active site involves R174. S223 acts as the Proton donor in catalysis. E293 is a catalytic residue.

The protein belongs to the MurB family. Requires FAD as cofactor.

The protein resides in the cytoplasm. The enzyme catalyses UDP-N-acetyl-alpha-D-muramate + NADP(+) = UDP-N-acetyl-3-O-(1-carboxyvinyl)-alpha-D-glucosamine + NADPH + H(+). The protein operates within cell wall biogenesis; peptidoglycan biosynthesis. Functionally, cell wall formation. The protein is UDP-N-acetylenolpyruvoylglucosamine reductase of Geobacter sulfurreducens (strain ATCC 51573 / DSM 12127 / PCA).